Consider the following 120-residue polypeptide: Large ribosomal subunit protein uL22 (120 aa).

The protein belongs to the universal ribosomal protein uL22 family. In terms of assembly, part of the 50S ribosomal subunit.

This protein binds specifically to 23S rRNA; its binding is stimulated by other ribosomal proteins, e.g. L4, L17, and L20. It is important during the early stages of 50S assembly. It makes multiple contacts with different domains of the 23S rRNA in the assembled 50S subunit and ribosome. Its function is as follows. The globular domain of the protein is located near the polypeptide exit tunnel on the outside of the subunit, while an extended beta-hairpin is found that lines the wall of the exit tunnel in the center of the 70S ribosome. The protein is Large ribosomal subunit protein uL22 of Corynebacterium diphtheriae (strain ATCC 700971 / NCTC 13129 / Biotype gravis).